The primary structure comprises 447 residues: MSASATNGTHYEQLHQGRTKMYKSKVDVVLGAQWGDEGKGKVVDMLASDVDIVCRCQGGNNAGHTVVANGTEFDFHLLPSGVVNEKCVSVIGNGVVIHLPSLFDEVLKNEAKGLQHLENRLIISDRAHLVFDFHQHVDGMQEAEKGGKSLGTTKKGIGPAYSSKATRNGIRVGELLGDFNLFSEKFKSIVATHVRLFPSINVDVEAELARYKDYADKVRPYVKDTICFLHTALRNGKTILVEGANAAMLDIDFGTYPYVTSSNCSIGGVLTGLGLPPQTIGEVIGVVKAYTTRVGDGPFPTEQLNDIGDLLQTRGFEVGVTTKRKRRCGWLDIPLLKYTSLVNGYTCICLTKLDILDTLPEIKVAVAYKKPNGEKLDHFPGTIAELGNIEVEYAVLPGWQTSTEEVRNFKELPENAQSYVRLLESELSVPVRWVGVGKGRESIINVH.

GTP-binding positions include 35–41 (GDEGKGK) and 63–65 (GHT). Aspartate 36 serves as the catalytic Proton acceptor. Residues aspartate 36 and glycine 63 each coordinate Mg(2+). IMP-binding positions include 36–39 (DEGK), 61–64 (NAGH), threonine 153, arginine 167, asparagine 245, threonine 260, and arginine 324. The active-site Proton donor is histidine 64. 320 to 326 (VTTKRKR) contacts substrate. GTP contacts are provided by residues arginine 326, 352 to 354 (KLD), and 435 to 437 (GVG).

Belongs to the adenylosuccinate synthetase family. Homodimer. The cofactor is Mg(2+).

The protein localises to the cytoplasm. The enzyme catalyses IMP + L-aspartate + GTP = N(6)-(1,2-dicarboxyethyl)-AMP + GDP + phosphate + 2 H(+). It functions in the pathway purine metabolism; AMP biosynthesis via de novo pathway; AMP from IMP: step 1/2. Functionally, plays an important role in the de novo pathway and in the salvage pathway of purine nucleotide biosynthesis. Catalyzes the first committed step in the biosynthesis of AMP from IMP. Plays a role in the regulation of adult life span. The polypeptide is Adenylosuccinate synthetase (Drosophila melanogaster (Fruit fly)).